Reading from the N-terminus, the 343-residue chain is Dihydroorotase (343 aa).

Positions 13 and 15 each coordinate Zn(2+). Residues His15 to Arg17 and Asn41 each bind substrate. Positions 99, 136, and 174 each coordinate Zn(2+). Lys99 is modified (N6-carboxylysine). Substrate is bound at residue His136. Leu219 serves as a coordination point for substrate. Asp247 is a Zn(2+) binding site. Asp247 is a catalytic residue. His251 and Ala263 together coordinate substrate.

It belongs to the metallo-dependent hydrolases superfamily. DHOase family. Class II DHOase subfamily. Homodimer. The cofactor is Zn(2+).

It carries out the reaction (S)-dihydroorotate + H2O = N-carbamoyl-L-aspartate + H(+). It functions in the pathway pyrimidine metabolism; UMP biosynthesis via de novo pathway; (S)-dihydroorotate from bicarbonate: step 3/3. Functionally, catalyzes the reversible cyclization of carbamoyl aspartate to dihydroorotate. The sequence is that of Dihydroorotase from Shewanella baltica (strain OS195).